The primary structure comprises 246 residues: Transcription factor A, mitochondrial (246 aa).

The transit peptide at 1–42 (MAFLRSMWGVLSALGRSGAAVCIGCGSRLRSPFSFVYLPKCF) directs the protein to the mitochondrion. A DNA-binding region (HMG box 1) is located at residues 50 to 118 (PKKPVSSYLR…VYKEKISRFK (69 aa)). A phosphoserine; by PKA mark is found at S55, S56, and S61. T122 bears the Phosphothreonine mark. The HMG box 2 DNA-binding region spans 155 to 219 (PKRPRSAYNV…RYHNEMKSWE (65 aa)). At S160 the chain carries Phosphoserine; by PKA. Residues S193 and S195 each carry the phosphoserine modification.

As to quaternary structure, monomer; binds DNA as a monomer. Homodimer. Component of the mitochondrial transcription initiation complex, composed at least of TFB2M, TFAM and POLRMT. In this complex TFAM recruits POLRMT to the promoter whereas TFB2M induces structural changes in POLRMT to enable promoter opening and trapping of the DNA non-template strand. Upon metabolic stress, forms a complex composed of FOXO3, SIRT3, TFAM and POLRMT. Interacts with TFB1M and TFB2M. Interacts with CLPX; this enhances DNA-binding. In terms of processing, phosphorylation by PKA within the HMG box 1 impairs DNA binding and promotes degradation by the AAA+ Lon protease.

Its subcellular location is the mitochondrion. The protein localises to the mitochondrion matrix. It localises to the mitochondrion nucleoid. Functionally, binds to the mitochondrial light strand promoter and functions in mitochondrial transcription regulation. Component of the mitochondrial transcription initiation complex, composed at least of TFB2M, TFAM and POLRMT that is required for basal transcription of mitochondrial DNA. In this complex, TFAM recruits POLRMT to a specific promoter whereas TFB2M induces structural changes in POLRMT to enable promoter opening and trapping of the DNA non-template strand. Required for accurate and efficient promoter recognition by the mitochondrial RNA polymerase. Promotes transcription initiation from the HSP1 and the light strand promoter by binding immediately upstream of transcriptional start sites. Is able to unwind DNA. Bends the mitochondrial light strand promoter DNA into a U-turn shape via its HMG boxes. Required for maintenance of normal levels of mitochondrial DNA. May play a role in organizing and compacting mitochondrial DNA. The polypeptide is Transcription factor A, mitochondrial (Trachypithecus cristatus (Silvered leaf-monkey)).